The following is a 307-amino-acid chain: Dof zinc finger protein DOF5.4 (307 aa).

The segment at 51-105 adopts a Dof-type zinc-finger fold; the sequence is LKCPRCNSLNTKFCYYNNYNLSQPRHFCKNCRRYWTKGGVLRNVPVGGGCRKAKR. Zn(2+) is bound by residues C53, C56, C78, and C81. The interval 96–147 is disordered; it reads VGGGCRKAKRSKTKQVPSSSSADKPTTTQDDHHVEEKSSTGSHSSSESSSLT. Positions 109-123 are enriched in polar residues; that stretch reads KQVPSSSSADKPTTT. The span at 124–133 shows a compositional bias: basic and acidic residues; it reads QDDHHVEEKS. Residues 134–147 are compositionally biased toward low complexity; that stretch reads STGSHSSSESSSLT.

It is found in the nucleus. Transcription factor that binds specifically to a 5'-AA[AG]G-3' consensus core sequence. Enhances the DNA binding of OBF transcription factors to OCS elements. The sequence is that of Dof zinc finger protein DOF5.4 (DOF5.4) from Arabidopsis thaliana (Mouse-ear cress).